The chain runs to 156 residues: CD-NTase-associated protein 8 (156 aa).

The protein belongs to the bacterial HORMA family. HORMA3 subfamily. In terms of assembly, interacts with Cap7 (also called HORMA2) and CdnC; forms CdnD:Cap7:Cap8 (also called CdnD:HORMA2:HORMA3) complexes with stoichiometries of 1:1:1 and 2:1:1.

CBASS (cyclic oligonucleotide-based antiphage signaling system) provides immunity against bacteriophage. The CD-NTase protein synthesizes cyclic nucleotides in response to infection; these serve as specific second messenger signals. The signals activate a diverse range of effectors, leading to bacterial cell death and thus abortive phage infection. A type III-C(AAA) CBASS system. In terms of biological role, a member of the CBASS system in this bacteria. It does not seem to bind a closure peptide, its exact function is unknown. The polypeptide is CD-NTase-associated protein 8 (Pseudomonas aeruginosa).